Consider the following 227-residue polypeptide: Probable chorismate pyruvate-lyase (227 aa).

3 residues coordinate substrate: R75, L113, and E173. The interval 192–227 (SGDWSAHPRVREHGRPLEHTASRAHPATRASDEQRR) is disordered. The segment covering 200–212 (RVREHGRPLEHTA) has biased composition (basic and acidic residues).

This sequence belongs to the UbiC family.

It localises to the cytoplasm. The enzyme catalyses chorismate = 4-hydroxybenzoate + pyruvate. The protein operates within cofactor biosynthesis; ubiquinone biosynthesis. Removes the pyruvyl group from chorismate, with concomitant aromatization of the ring, to provide 4-hydroxybenzoate (4HB) for the ubiquinone pathway. This is Probable chorismate pyruvate-lyase from Paraburkholderia xenovorans (strain LB400).